We begin with the raw amino-acid sequence, 776 residues long: Venom dipeptidyl peptidase 4 (776 aa).

Positions 1–25 are cleaved as a signal peptide; sequence MVPLRSFVLLNSLFLVLLAARTVVT. N44, N66, and N329 each carry an N-linked (GlcNAc...) asparagine glycan. 2 cysteine pairs are disulfide-bonded: C449–C452 and C462–C480. N-linked (GlcNAc...) asparagine glycans are attached at residues N504 and N577. S638 serves as the catalytic Charge relay system. C658 and C769 are joined by a disulfide. N-linked (GlcNAc...) asparagine glycans are attached at residues N688 and N693. Residues D717 and H749 each act as charge relay system in the active site.

It belongs to the peptidase S9B family. DPPIV subfamily. In terms of tissue distribution, expressed by the venom gland.

Its subcellular location is the secreted. The enzyme catalyses Release of an N-terminal dipeptide, Xaa-Yaa-|-Zaa-, from a polypeptide, preferentially when Yaa is Pro, provided Zaa is neither Pro nor hydroxyproline.. Its activity is regulated as follows. Inhibited by diprotin A. Venom dipeptidyl-peptidase which removes N-terminal dipeptides sequentially from polypeptides having unsubstituted N-termini provided that the penultimate residue is proline. May process venom proteins into their active forms and/or modulate the chemotactic activity of immune cells after the insect sting. The sequence is that of Venom dipeptidyl peptidase 4 from Vespula vulgaris (Yellow jacket).